The chain runs to 308 residues: Aspartate carbamoyltransferase catalytic subunit (308 aa).

The carbamoyl phosphate site is built by Arg-57 and Thr-58. Lys-86 provides a ligand contact to L-aspartate. Carbamoyl phosphate is bound by residues Arg-107, His-135, and Gln-138. The L-aspartate site is built by Arg-167 and Arg-228. Carbamoyl phosphate-binding residues include Leu-267 and Pro-268.

The protein belongs to the aspartate/ornithine carbamoyltransferase superfamily. ATCase family. Heterooligomer of catalytic and regulatory chains.

The catalysed reaction is carbamoyl phosphate + L-aspartate = N-carbamoyl-L-aspartate + phosphate + H(+). Its pathway is pyrimidine metabolism; UMP biosynthesis via de novo pathway; (S)-dihydroorotate from bicarbonate: step 2/3. Catalyzes the condensation of carbamoyl phosphate and aspartate to form carbamoyl aspartate and inorganic phosphate, the committed step in the de novo pyrimidine nucleotide biosynthesis pathway. The polypeptide is Aspartate carbamoyltransferase catalytic subunit (Methanococcoides burtonii (strain DSM 6242 / NBRC 107633 / OCM 468 / ACE-M)).